We begin with the raw amino-acid sequence, 266 residues long: Apolipoprotein A-I (266 aa).

Residues 1-18 (MKAALLTLAVLFLTGSQA) form the signal peptide. 2 consecutive repeat copies span residues 67–88 (LKLLDNWDSLSSTVTKLREQIG) and 89–110 (PVTQEFWDNLEKETEVLRQEMS). Residues 67–266 (LKLLDNWDSL…DEATKKLNAQ (200 aa)) are 10 X approximate tandem repeats. Methionine 109 carries the post-translational modification Methionine sulfoxide. The stretch at 111–121 (KDLEEVKQKVQ) is one 3; half-length repeat. 5 consecutive repeat copies span residues 122–143 (PYLDDFQKKWQEEVELYRQKVA), 144–165 (PLGSELREGARQKLQELQEKLS), 166–187 (PLAEELRDRARTHVDALRAQLA), 188–209 (PYSDDLRERLAARLEALKEGGG), and 210–231 (ASLAEYHARASEQLSALGEKAR). The 9; half-length repeat unit spans residues 232–242 (PALEDLRQGLL). Repeat unit 10 spans residues 243 to 266 (PVLESFKVSLLAAIDEATKKLNAQ).

It belongs to the apolipoprotein A1/A4/E family. Homodimer. Interacts with APOA1BP and CLU. Component of a sperm activating protein complex (SPAP), consisting of APOA1, an immunoglobulin heavy chain, an immunoglobulin light chain and albumin. Interacts with NDRG1. Interacts with SCGB3A2. Interacts with NAXE and YJEFN3. In terms of processing, palmitoylated. Post-translationally, glycosylated. Phosphorylation sites are present in the extracellular medium. In terms of tissue distribution, major protein of plasma HDL, also found in chylomicrons. Synthesized in the liver and small intestine.

It is found in the secreted. In terms of biological role, participates in the reverse transport of cholesterol from tissues to the liver for excretion by promoting cholesterol efflux from tissues and by acting as a cofactor for the lecithin cholesterol acyltransferase (LCAT). As part of the SPAP complex, activates spermatozoa motility. The protein is Apolipoprotein A-I (APOA1) of Canis lupus familiaris (Dog).